A 330-amino-acid chain; its full sequence is Transcription factor TGA2 (330 aa).

A disordered region spans residues 1 to 48 (MADTSPRTDVSTDDDTDHPDLGSEGALVNTAASDSSDRSKGKMDQKTL). The span at 35–47 (SSDRSKGKMDQKT) shows a compositional bias: basic and acidic residues. Residues 44 to 107 (DQKTLRRLAQ…GTGDQAHSTG (64 aa)) enclose the bZIP domain. 2 coiled-coil regions span residues 45-142 (QKTL…HAGD) and 217-244 (INNL…SLAD). The basic motif stretch occupies residues 46–66 (KTLRRLAQNREAARKSRLRKK). Residues 72–86 (LENSRLKLTQLEQEL) are leucine-zipper. The DOG1 domain maps to 111 to 327 (ALAFDAEHSR…RALSSLWLAR (217 aa)).

The protein belongs to the bZIP family. Binds DNA as a dimer. Interacts with NPR1, NPR3 and NPR4. Interacts with GRXC7/ROXY1 and GRXC9/GRX480. In terms of tissue distribution, expressed in the whole plant.

The protein localises to the nucleus. Its function is as follows. Transcriptional activator that binds specifically to the DNA sequence 5'-TGACG-3'. Recognizes ocs elements like the as-1 motif of the cauliflower mosaic virus 35S promoter. Binding to the as-1-like cis elements mediate auxin- and salicylic acid-inducible transcription. Required to induce the systemic acquired resistance (SAR) via the regulation of pathogenesis-related genes expression. Binding to the as-1 element of PR-1 promoter is salicylic acid-inducible and mediated by NPR1. Could also bind to the C-boxes (5'-ATGACGTCAT-3') with high affinity. This chain is Transcription factor TGA2 (TGA2), found in Arabidopsis thaliana (Mouse-ear cress).